The following is a 387-amino-acid chain: 1-hydroxy-2-naphthoate 1,2-dioxygenasee (387 aa).

Cupin type-2 domains lie at 103-171 and 271-337; these read FQLV…VWLD and VQRL…VLLF.

In terms of assembly, homohexamer. The cofactor is Fe(2+).

The catalysed reaction is 1-hydroxy-2-naphthoate + O2 = (3Z)-4-(2-carboxyphenyl)-2-oxobut-3-enoate + H(+). Functionally, dioxygenase involved in phenanthrene catabolism by mediating cleavage of 1-hydroxy-2-naphthoate. This chain is 1-hydroxy-2-naphthoate 1,2-dioxygenasee (phdI), found in Nocardioides sp. (strain KP7).